We begin with the raw amino-acid sequence, 359 residues long: Fructose-bisphosphate aldolase class 2 (359 aa).

Ser-62 serves as a coordination point for D-glyceraldehyde 3-phosphate. Asp-110 acts as the Proton donor in catalysis. The Zn(2+) site is built by His-111, Asp-145, Glu-175, and His-227. Gly-228 contributes to the dihydroxyacetone phosphate binding site. Position 265 (His-265) interacts with Zn(2+). Dihydroxyacetone phosphate contacts are provided by residues 266–268 (GGS) and 287–290 (NIDT).

The protein belongs to the class II fructose-bisphosphate aldolase family. It depends on Zn(2+) as a cofactor.

The enzyme catalyses beta-D-fructose 1,6-bisphosphate = D-glyceraldehyde 3-phosphate + dihydroxyacetone phosphate. Its pathway is carbohydrate degradation; glycolysis; D-glyceraldehyde 3-phosphate and glycerone phosphate from D-glucose: step 4/4. Its function is as follows. Catalyzes the aldol condensation of dihydroxyacetone phosphate (DHAP or glycerone-phosphate) with glyceraldehyde 3-phosphate (G3P) to form fructose 1,6-bisphosphate (FBP) in gluconeogenesis and the reverse reaction in glycolysis. This is Fructose-bisphosphate aldolase class 2 (fbaA) from Buchnera aphidicola subsp. Baizongia pistaciae (strain Bp).